Here is a 319-residue protein sequence, read N- to C-terminus: Forkhead box protein B1 (319 aa).

Positions 13–107 (KPPYSYISLT…ENGSFLRRRK (95 aa)) form a DNA-binding region, fork-head. Positions 278 to 310 (LSNSSPSMSPTSPQTATSQSSPATPSDTLTNPS) are disordered. The span at 279-305 (SNSSPSMSPTSPQTATSQSSPATPSDT) shows a compositional bias: low complexity.

In early gastrulae, expressed in the inner layer of the posterior dorsal ectoderm and in non-involuted mesoderm. By the mid-gastrula stage, expressed solely in the posterior ectoderm. At the end of gastrulation, expressed in ectodermal regions fated to become diencephalon, midbrain and hindbrain, and weakly expressed in regions fated to become spinal cord and tailbud. At the neurula stage, expressed in the midbrain and posterior forebrain (diencephalon) but not in the more anterior forebrain (telencephalon). Also expressed posteriorly in rhombomere 5. At tailbud stages, expression remains in the anterior brain and is also detectable along the length of the central nervous system and in the tailbud.

It localises to the nucleus. Its function is as follows. Probable transcription factor. May be involved in the early anteroposterior patterning of the neuroectoderm. This chain is Forkhead box protein B1, found in Xenopus laevis (African clawed frog).